The sequence spans 283 residues: Pantothenate synthetase (283 aa).

31 to 38 (MGALHDGH) provides a ligand contact to ATP. The Proton donor role is filled by histidine 38. A (R)-pantoate-binding site is contributed by glutamine 62. Position 62 (glutamine 62) interacts with beta-alanine. 148-151 (GKKD) provides a ligand contact to ATP. Glutamine 154 serves as a coordination point for (R)-pantoate. Residues isoleucine 177 and 185–188 (KSSR) contribute to the ATP site.

The protein belongs to the pantothenate synthetase family. In terms of assembly, homodimer.

It localises to the cytoplasm. It carries out the reaction (R)-pantoate + beta-alanine + ATP = (R)-pantothenate + AMP + diphosphate + H(+). It participates in cofactor biosynthesis; (R)-pantothenate biosynthesis; (R)-pantothenate from (R)-pantoate and beta-alanine: step 1/1. In terms of biological role, catalyzes the condensation of pantoate with beta-alanine in an ATP-dependent reaction via a pantoyl-adenylate intermediate. The chain is Pantothenate synthetase from Oceanobacillus iheyensis (strain DSM 14371 / CIP 107618 / JCM 11309 / KCTC 3954 / HTE831).